Reading from the N-terminus, the 340-residue chain is Anthranilate phosphoribosyltransferase (340 aa).

5-phospho-alpha-D-ribose 1-diphosphate is bound by residues glycine 82, glycine 85–aspartate 86, threonine 90, asparagine 92–threonine 95, lysine 110–serine 118, and serine 122. Glycine 82 contributes to the anthranilate binding site. Serine 94 provides a ligand contact to Mg(2+). Arginine 168 serves as a coordination point for anthranilate. Positions 227 and 228 each coordinate Mg(2+).

Belongs to the anthranilate phosphoribosyltransferase family. Homodimer. The cofactor is Mg(2+).

It carries out the reaction N-(5-phospho-beta-D-ribosyl)anthranilate + diphosphate = 5-phospho-alpha-D-ribose 1-diphosphate + anthranilate. Its pathway is amino-acid biosynthesis; L-tryptophan biosynthesis; L-tryptophan from chorismate: step 2/5. Catalyzes the transfer of the phosphoribosyl group of 5-phosphorylribose-1-pyrophosphate (PRPP) to anthranilate to yield N-(5'-phosphoribosyl)-anthranilate (PRA). This Hydrogenovibrio crunogenus (strain DSM 25203 / XCL-2) (Thiomicrospira crunogena) protein is Anthranilate phosphoribosyltransferase.